The following is a 76-amino-acid chain: Membrane protein UL43 homolog (76 aa).

2 helical membrane-spanning segments follow: residues 7-27 (AVCV…SLAF) and 54-74 (ISRW…ATII).

Belongs to the alphaherpesvirinae HHV-1 UL43 family.

Its subcellular location is the membrane. This chain is Membrane protein UL43 homolog, found in Equus caballus (Horse).